A 362-amino-acid polypeptide reads, in one-letter code: Serine/threonine-protein phosphatase 2A activator 1 (362 aa).

Over residues 1–10 (MQPHTQPPQP) the composition is skewed to pro residues. Disordered regions lie at residues 1–28 (MQPHTQPPQPEASSSRAVHIPSDPAPPR) and 339–362 (NVEERGDKNEGKGTDAGTKAPWAR). The segment covering 340–351 (VEERGDKNEGKG) has biased composition (basic and acidic residues).

The protein belongs to the PTPA-type PPIase family.

Its subcellular location is the cytoplasm. It is found in the nucleus. The enzyme catalyses [protein]-peptidylproline (omega=180) = [protein]-peptidylproline (omega=0). Its function is as follows. PPIases accelerate the folding of proteins. It catalyzes the cis-trans isomerization of proline imidic peptide bonds in oligopeptides. Acts as a regulatory subunit for PP2A-like phosphatases modulating their activity or substrate specificity, probably by inducing a conformational change in the catalytic subunit, a direct target of the PPIase. Can reactivate inactive phosphatase PP2A-phosphatase methylesterase complexes (PP2Ai) in presence of ATP and Mg(2+) by dissociating the inactive form from the complex. The polypeptide is Serine/threonine-protein phosphatase 2A activator 1 (RRD1) (Cryptococcus neoformans var. neoformans serotype D (strain B-3501A) (Filobasidiella neoformans)).